The chain runs to 362 residues: Dihydroorotate dehydrogenase (quinone) (362 aa).

Residues 62–66 (AGYDK) and Thr-86 each bind FMN. Residue Lys-66 participates in substrate binding. 111-115 (NRLGF) is a substrate binding site. Residues Asn-139 and Asn-170 each coordinate FMN. Asn-170 serves as a coordination point for substrate. Ser-173 (nucleophile) is an active-site residue. Asn-175 contacts substrate. Lys-215 and Ser-243 together coordinate FMN. 244–245 (NT) is a binding site for substrate. Residues Gly-266, Gly-295, and 316–317 (YS) each bind FMN.

This sequence belongs to the dihydroorotate dehydrogenase family. Type 2 subfamily. As to quaternary structure, monomer. FMN is required as a cofactor.

The protein localises to the cell membrane. The enzyme catalyses (S)-dihydroorotate + a quinone = orotate + a quinol. It functions in the pathway pyrimidine metabolism; UMP biosynthesis via de novo pathway; orotate from (S)-dihydroorotate (quinone route): step 1/1. In terms of biological role, catalyzes the conversion of dihydroorotate to orotate with quinone as electron acceptor. In Rhizobium etli (strain ATCC 51251 / DSM 11541 / JCM 21823 / NBRC 15573 / CFN 42), this protein is Dihydroorotate dehydrogenase (quinone).